Reading from the N-terminus, the 894-residue chain is Protein NLP9 (894 aa).

Residues 517–603 form the RWP-RK domain; sequence QEISGARRLE…LDSVQGVEGG (87 aa). The stretch at 578-598 forms a coiled coil; sequence RKINKVNRSLRKIQTVLDSVQ. The disordered stretch occupies residues 732–763; that stretch reads NTRIERGNGTVEPNHSISSSMSDSSNSSGAVL. A compositionally biased stretch (low complexity) spans 747–763; the sequence is SISSSMSDSSNSSGAVL. Residues 792–875 form the PB1 domain; sequence TLTVKATYRE…HTVKFLVRDI (84 aa).

It is found in the nucleus. Functionally, probable transcription factor. This chain is Protein NLP9 (NLP9), found in Arabidopsis thaliana (Mouse-ear cress).